We begin with the raw amino-acid sequence, 347 residues long: MFALASMTTSGDEALNARYKESVSLSVGLCESLPEQFKLIETPINSFLLVANVMPNDDRPWDSHPASGADFHNIRMPRLERLRALIRCDRGYNNGKGGEAGQRAGEDDERMDEGVPEEGAPRSPHPPPFAHYEVYDSWSWQRALRVDKDDVIREAVAELAKPANWQGTAVEDPLPLMWLLFYGRRSFCDDPECLYRARFGHPGPLLLPNYMYRPAEDASSFLAGLCRCVRSVYGCEFGGGSHVNPAQVPFDHGRFSEALRKLGAVDDAGAYVSRQCLVCRLYRQNLMSRGIIGGRGSSIVLGGSGKKYLTREVGTRRCLELGDIALYPSYDISLILDDLEASDGLRQ.

A disordered region spans residues 95 to 126; the sequence is GKGGEAGQRAGEDDERMDEGVPEEGAPRSPHP. A compositionally biased stretch (acidic residues) spans 106–116; it reads EDDERMDEGVP.

This sequence belongs to the herpesviridae UL95 family.

This chain is Gene 34 protein (34), found in Equus caballus (Horse).